A 348-amino-acid chain; its full sequence is Protein RecA (348 aa).

65–72 (GPESSGKT) lines the ATP pocket.

Belongs to the RecA family.

It is found in the cytoplasm. Functionally, can catalyze the hydrolysis of ATP in the presence of single-stranded DNA, the ATP-dependent uptake of single-stranded DNA by duplex DNA, and the ATP-dependent hybridization of homologous single-stranded DNAs. It interacts with LexA causing its activation and leading to its autocatalytic cleavage. The protein is Protein RecA of Enterococcus faecalis (strain ATCC 700802 / V583).